The following is an 838-amino-acid chain: Protein P (838 aa).

The tract at residues 1–179 (MPLSYQHFRK…FCGSPYSWEQ (179 aa)) is terminal protein domain (TP). Positions 180 to 341 (ELQHSQRHGD…YCLSHLVNLR (162 aa)) are spacer. The interval 219–245 (GLQPHQGPLASSQPGRSGSIRARAHPS) is disordered. The polymerase/reverse transcriptase domain (RT) stretch occupies residues 342–685 (EDWGPCDDHG…YMNLYPVARQ (344 aa)). Residues 352–595 (EHHIRIPRTP…YSLNFMGYII (244 aa)) form the Reverse transcriptase domain. Residues aspartate 424, aspartate 546, and aspartate 547 each coordinate Mg(2+).

It belongs to the hepadnaviridae P protein family.

The enzyme catalyses DNA(n) + a 2'-deoxyribonucleoside 5'-triphosphate = DNA(n+1) + diphosphate. The catalysed reaction is Endonucleolytic cleavage to 5'-phosphomonoester.. Its activity is regulated as follows. Activated by host HSP70 and HSP40 in vitro to be able to bind the epsilon loop of the pgRNA. Because deletion of the RNase H region renders the protein partly chaperone-independent, the chaperones may be needed indirectly to relieve occlusion of the RNA-binding site by this domain. Inhibited by several reverse-transcriptase inhibitors: Lamivudine, Adefovir and Entecavir. Functionally, multifunctional enzyme that converts the viral RNA genome into dsDNA in viral cytoplasmic capsids. This enzyme displays a DNA polymerase activity that can copy either DNA or RNA templates, and a ribonuclease H (RNase H) activity that cleaves the RNA strand of RNA-DNA heteroduplexes in a partially processive 3'- to 5'-endonucleasic mode. Neo-synthesized pregenomic RNA (pgRNA) are encapsidated together with the P protein, and reverse-transcribed inside the nucleocapsid. Initiation of reverse-transcription occurs first by binding the epsilon loop on the pgRNA genome, and is initiated by protein priming, thereby the 5'-end of (-)DNA is covalently linked to P protein. Partial (+)DNA is synthesized from the (-)DNA template and generates the relaxed circular DNA (RC-DNA) genome. After budding and infection, the RC-DNA migrates in the nucleus, and is converted into a plasmid-like covalently closed circular DNA (cccDNA). The activity of P protein does not seem to be necessary for cccDNA generation, and is presumably released from (+)DNA by host nuclear DNA repair machinery. The protein is Protein P of Hepatitis B virus genotype A2 subtype adw (isolate Japan/Nishioka/1983) (HBV-A).